The chain runs to 358 residues: GDSL esterase/lipase EXL5 (358 aa).

The N-terminal stretch at 1-21 is a signal peptide; sequence MFRKKMLVLALFSIYFLSIEA. Asparagine 24 is a glycosylation site (N-linked (GlcNAc...) asparagine). The Nucleophile role is filled by serine 36. Active-site residues include aspartate 333 and histidine 336.

It belongs to the 'GDSL' lipolytic enzyme family. Flower buds.

The protein resides in the secreted. This Arabidopsis thaliana (Mouse-ear cress) protein is GDSL esterase/lipase EXL5 (EXL5).